The sequence spans 599 residues: DNA-directed RNA polymerase III subunit RPC3 (599 aa).

Residues P350–I375 are disordered. The span at D359–E370 shows a compositional bias: basic and acidic residues. The leucine-zipper stretch occupies residues L528–L549.

The protein belongs to the RNA polymerase beta chain family. As to quaternary structure, component of the RNA polymerase III (Pol III) complex consisting of 17 subunits.

The protein localises to the nucleus. Its function is as follows. DNA-dependent RNA polymerase catalyzes the transcription of DNA into RNA using the four ribonucleoside triphosphates as substrates. Specific core component of RNA polymerase III which synthesizes small RNAs, such as 5S rRNA and tRNAs. This is DNA-directed RNA polymerase III subunit RPC3 (RPC82) from Scheffersomyces stipitis (strain ATCC 58785 / CBS 6054 / NBRC 10063 / NRRL Y-11545) (Yeast).